A 1014-amino-acid polypeptide reads, in one-letter code: Ephrin type-B receptor 6 (1014 aa).

The N-terminal stretch at 1–32 is a signal peptide; sequence MATEGTTGSGSRVVAGMVCSLWLLVLGSSVLA. At 33-591 the chain is on the extracellular side; it reads LEEVLLDTTG…LPEKLSLVIG (559 aa). Residues 34–232 enclose the Eph LBD domain; it reads EEVLLDTTGE…FSYTCPSVLR (199 aa). 2 Fibronectin type-III domains span residues 364-479 and 480-575; these read PPSA…TSHE and VPSA…TLPQ. Asn473 is a glycosylation site (N-linked (GlcNAc...) asparagine). Residues 592–612 traverse the membrane as a helical segment; the sequence is SILGALAFLLLAAITVLAVIF. At 613–1014 the chain is on the cytoplasmic side; that stretch reads QRKRRGTGYT…HLRQPGSVEV (402 aa). Residues 663-912 enclose the Protein kinase domain; sequence IKIEEVIGAG…QLVAAFDKMI (250 aa). 669–677 serves as a coordination point for ATP; sequence IGAGSFGEV. The SAM domain maps to 941–1005; sequence PCLDSPQAWL…LHNIQLLQQH (65 aa). The PDZ-binding signature appears at 1012–1014; that stretch reads VEV.

It belongs to the protein kinase superfamily. Tyr protein kinase family. Ephrin receptor subfamily. Interacts with CBL and EPHB1. Interacts with FYN; this interaction takes place in a ligand-independent manner. In terms of processing, ligand-binding increases phosphorylation on tyrosine residues. Phosphorylation on tyrosine residues is mediated by transphosphorylation by the catalytically active EPHB1 in a ligand-independent manner. Tyrosine phosphorylation of the receptor may act as a switch on the functional transition from cell adhesion/attraction to de-adhesion/repulsion. As to expression, high level in thymus, and brain. Very low levels of expression in kidney, lung, liver, bone marrow, skeletal muscle, spleen from 2 week old and adult mice, heart, testes and embryonic stem cells.

The protein localises to the cell membrane. Its subcellular location is the secreted. Functionally, kinase-defective receptor for members of the ephrin-B family. Binds to ephrin-B1 and ephrin-B2. Modulates cell adhesion and migration by exerting both positive and negative effects upon stimulation with ephrin-B2. Inhibits JNK activation, T-cell receptor-induced IL-2 secretion and CD25 expression upon stimulation with ephrin-B2. The sequence is that of Ephrin type-B receptor 6 (Ephb6) from Mus musculus (Mouse).